A 258-amino-acid chain; its full sequence is UPF0246 protein Sfri_2896 (258 aa).

The protein belongs to the UPF0246 family.

This chain is UPF0246 protein Sfri_2896, found in Shewanella frigidimarina (strain NCIMB 400).